Reading from the N-terminus, the 338-residue chain is tRNA N6-adenosine threonylcarbamoyltransferase (338 aa).

The Fe cation site is built by histidine 111 and histidine 115. Substrate is bound by residues 134–138, aspartate 167, glycine 180, aspartate 184, and asparagine 272; that span reads VVSGG. Aspartate 300 serves as a coordination point for Fe cation.

This sequence belongs to the KAE1 / TsaD family. Fe(2+) is required as a cofactor.

Its subcellular location is the cytoplasm. The enzyme catalyses L-threonylcarbamoyladenylate + adenosine(37) in tRNA = N(6)-L-threonylcarbamoyladenosine(37) in tRNA + AMP + H(+). Its function is as follows. Required for the formation of a threonylcarbamoyl group on adenosine at position 37 (t(6)A37) in tRNAs that read codons beginning with adenine. Is involved in the transfer of the threonylcarbamoyl moiety of threonylcarbamoyl-AMP (TC-AMP) to the N6 group of A37, together with TsaE and TsaB. TsaD likely plays a direct catalytic role in this reaction. In Syntrophus aciditrophicus (strain SB), this protein is tRNA N6-adenosine threonylcarbamoyltransferase.